The sequence spans 476 residues: Protein transport protein Sec61 subunit alpha isoform 2 (476 aa).

Residues 1-33 lie on the Cytoplasmic side of the membrane; sequence MGIKFLEVIKPFCAVLPEIQKPERKIQFREKVL. A helical transmembrane segment spans residues 34–53; sequence WTAITLFIFLVCCQIPLFGI. The Lumenal portion of the chain corresponds to 54-76; the sequence is MSSDSADPFYWMRVILASNRGTL. The helical transmembrane segment at 77–96 threads the bilayer; that stretch reads MELGISPIVTSGLIMQLLAG. Over 97–117 the chain is Cytoplasmic; sequence AKIIEVGDTPKDRALFNGAQK. Residues 118–138 traverse the membrane as a helical segment; the sequence is LFGMIITIGQAIVYVMTGMYG. The Lumenal portion of the chain corresponds to 139 to 144; the sequence is DPAEMG. The helical transmembrane segment at 145 to 165 threads the bilayer; the sequence is AGICLLIIIQLFVAGLIVLLL. Residues 166 to 172 are Cytoplasmic-facing; sequence DELLQKG. A helical membrane pass occupies residues 173–193; the sequence is YGLGSGISLFIATNICETIVW. The Lumenal portion of the chain corresponds to 194-240; it reads KAFSPTTINTGRGTEFEGAVIALFHLLATRTDKVRALREAFYRQNLP. Residues 241–261 form a helical membrane-spanning segment; the sequence is NLMNLIATVFVFAVVIYFQGF. Over 262-288 the chain is Cytoplasmic; the sequence is RVDLPIKSARYRGQYSSYPIKLFYTSN. Residues 289–309 form a helical membrane-spanning segment; it reads IPIILQSALVSNLYVISQMLS. Topologically, residues 310–354 are lumenal; the sequence is VRFSGNFLVNLLGQWADVSGGGPARSYPVGGLCYYLSPPESMGAI. The helical transmembrane segment at 355 to 375 threads the bilayer; that stretch reads FEDPVHVVVYIIFMLGSCAFF. Residues 376 to 420 are Cytoplasmic-facing; it reads SKTWIEVSGSSAKDVAKQLKEQQMVMRGHRDTSMVHELNRYIPTA. The chain crosses the membrane as a helical span at residues 421 to 441; that stretch reads AAFGGLCIGALSVLADFLGAI. Residues 442-445 lie on the Lumenal side of the membrane; the sequence is GSGT. Residues 446 to 462 traverse the membrane as a helical segment; sequence GILLAVTIIYQYFEIFV. Residues 463–476 lie on the Cytoplasmic side of the membrane; that stretch reads KEQAEVGGMGALFF.

This sequence belongs to the SecY/SEC61-alpha family. As to quaternary structure, the SEC61 channel-forming translocon complex consists of channel-forming core components SEC61A1, SEC61B and SEC61G and different auxiliary components such as SEC62 and SEC63.

The protein localises to the endoplasmic reticulum membrane. Component of SEC61 channel-forming translocon complex that mediates transport of signal peptide-containing precursor polypeptides across the endoplasmic reticulum (ER). Forms a ribosome receptor and a gated pore in the ER membrane, both functions required for cotranslational translocation of nascent polypeptides. The protein is Protein transport protein Sec61 subunit alpha isoform 2 (SEC61A2) of Homo sapiens (Human).